A 305-amino-acid chain; its full sequence is MENIQERGHLLTEQINPNSQNLDQLSTVELVDLFNTEDAQTLKAIAQARIELAQAIDVTSKALGKGGRLFYVGAGTSGRLGVLDAAECPPTFCTDPDMVQGIIAGGAAALVRSSENLEDRPQDGAEAIAGRKVTEKDVVVGISAGGTTPYVHGALNAAKQRGATTIAMACVPAEQVPIVVDIDIRLLTGPEVLAGSTRLKAGTVTKMALNILSTGVMVKLGKVYGNRMIDVSVTNTKLYDRALRILEELTELSRQEAAELLDRSGKRVKLALLMHWAELDAEVGQLLLDNHHGNLRAALQAGQNS.

Residues 59–222 (TSKALGKGGR…STGVMVKLGK (164 aa)) form the SIS domain. Catalysis depends on Glu87, which acts as the Proton donor. Residue Glu118 is part of the active site.

The protein belongs to the GCKR-like family. MurNAc-6-P etherase subfamily. As to quaternary structure, homodimer.

It carries out the reaction N-acetyl-D-muramate 6-phosphate + H2O = N-acetyl-D-glucosamine 6-phosphate + (R)-lactate. Its pathway is amino-sugar metabolism; N-acetylmuramate degradation. In terms of biological role, specifically catalyzes the cleavage of the D-lactyl ether substituent of MurNAc 6-phosphate, producing GlcNAc 6-phosphate and D-lactate. The chain is N-acetylmuramic acid 6-phosphate etherase from Crocosphaera subtropica (strain ATCC 51142 / BH68) (Cyanothece sp. (strain ATCC 51142)).